We begin with the raw amino-acid sequence, 244 residues long: 1-(5-phosphoribosyl)-5-[(5-phosphoribosylamino)methylideneamino] imidazole-4-carboxamide isomerase (244 aa).

Aspartate 10 (proton acceptor) is an active-site residue. Catalysis depends on aspartate 132, which acts as the Proton donor.

Belongs to the HisA/HisF family.

The protein localises to the cytoplasm. It catalyses the reaction 1-(5-phospho-beta-D-ribosyl)-5-[(5-phospho-beta-D-ribosylamino)methylideneamino]imidazole-4-carboxamide = 5-[(5-phospho-1-deoxy-D-ribulos-1-ylimino)methylamino]-1-(5-phospho-beta-D-ribosyl)imidazole-4-carboxamide. Its pathway is amino-acid biosynthesis; L-histidine biosynthesis; L-histidine from 5-phospho-alpha-D-ribose 1-diphosphate: step 4/9. This Stenotrophomonas maltophilia (strain K279a) protein is 1-(5-phosphoribosyl)-5-[(5-phosphoribosylamino)methylideneamino] imidazole-4-carboxamide isomerase.